The following is a 141-amino-acid chain: Large-conductance mechanosensitive channel (141 aa).

The next 3 membrane-spanning stretches (helical) occupy residues 17-37 (MDLA…ASIV), 40-60 (LIMP…LFIA), and 86-106 (GNFV…FIIV).

The protein belongs to the MscL family. Homopentamer.

The protein resides in the cell inner membrane. Channel that opens in response to stretch forces in the membrane lipid bilayer. May participate in the regulation of osmotic pressure changes within the cell. This chain is Large-conductance mechanosensitive channel, found in Thiobacillus denitrificans (strain ATCC 25259 / T1).